We begin with the raw amino-acid sequence, 515 residues long: Bifunctional purine biosynthesis protein PurH (515 aa).

In terms of domain architecture, MGS-like spans 1–145 (MTKRALISVS…KNHASVTVVV (145 aa)).

Belongs to the PurH family.

It carries out the reaction (6R)-10-formyltetrahydrofolate + 5-amino-1-(5-phospho-beta-D-ribosyl)imidazole-4-carboxamide = 5-formamido-1-(5-phospho-D-ribosyl)imidazole-4-carboxamide + (6S)-5,6,7,8-tetrahydrofolate. The enzyme catalyses IMP + H2O = 5-formamido-1-(5-phospho-D-ribosyl)imidazole-4-carboxamide. It functions in the pathway purine metabolism; IMP biosynthesis via de novo pathway; 5-formamido-1-(5-phospho-D-ribosyl)imidazole-4-carboxamide from 5-amino-1-(5-phospho-D-ribosyl)imidazole-4-carboxamide (10-formyl THF route): step 1/1. It participates in purine metabolism; IMP biosynthesis via de novo pathway; IMP from 5-formamido-1-(5-phospho-D-ribosyl)imidazole-4-carboxamide: step 1/1. In Streptococcus agalactiae serotype Ia (strain ATCC 27591 / A909 / CDC SS700), this protein is Bifunctional purine biosynthesis protein PurH.